The sequence spans 110 residues: Ribonuclease P protein component 1 (110 aa).

It belongs to the eukaryotic/archaeal RNase P protein component 1 family. As to quaternary structure, consists of a catalytic RNA component and at least 4-5 protein subunits.

It localises to the cytoplasm. The catalysed reaction is Endonucleolytic cleavage of RNA, removing 5'-extranucleotides from tRNA precursor.. Functionally, part of ribonuclease P, a protein complex that generates mature tRNA molecules by cleaving their 5'-ends. This is Ribonuclease P protein component 1 from Methanosarcina barkeri (strain Fusaro / DSM 804).